The sequence spans 316 residues: Transaldolase 1 (316 aa).

K131 functions as the Schiff-base intermediate with substrate in the catalytic mechanism.

Belongs to the transaldolase family. Type 1 subfamily. In terms of assembly, homodimer.

It localises to the cytoplasm. It catalyses the reaction D-sedoheptulose 7-phosphate + D-glyceraldehyde 3-phosphate = D-erythrose 4-phosphate + beta-D-fructose 6-phosphate. It participates in carbohydrate degradation; pentose phosphate pathway; D-glyceraldehyde 3-phosphate and beta-D-fructose 6-phosphate from D-ribose 5-phosphate and D-xylulose 5-phosphate (non-oxidative stage): step 2/3. Its function is as follows. Transaldolase is important for the balance of metabolites in the pentose-phosphate pathway. The sequence is that of Transaldolase 1 from Pectobacterium atrosepticum (strain SCRI 1043 / ATCC BAA-672) (Erwinia carotovora subsp. atroseptica).